The following is a 283-amino-acid chain: ATP synthase gamma chain (283 aa).

This sequence belongs to the ATPase gamma chain family. F-type ATPases have 2 components, CF(1) - the catalytic core - and CF(0) - the membrane proton channel. CF(1) has five subunits: alpha(3), beta(3), gamma(1), delta(1), epsilon(1). CF(0) has three main subunits: a, b and c.

It is found in the cell membrane. Its function is as follows. Produces ATP from ADP in the presence of a proton gradient across the membrane. The gamma chain is believed to be important in regulating ATPase activity and the flow of protons through the CF(0) complex. This Clostridium kluyveri (strain NBRC 12016) protein is ATP synthase gamma chain.